Here is a 131-residue protein sequence, read N- to C-terminus: Large ribosomal subunit protein mL60 (131 aa).

The transit peptide at 1–12 (MFGPFKLTSPVA) directs the protein to the mitochondrion.

The protein belongs to the mitochondrion-specific ribosomal protein mL60 family. As to quaternary structure, component of the mitochondrial large ribosomal subunit (mt-LSU). Mature yeast 74S mitochondrial ribosomes consist of a small (37S) and a large (54S) subunit. The 37S small subunit contains a 15S ribosomal RNA (15S mt-rRNA) and 34 different proteins. The 54S large subunit contains a 21S rRNA (21S mt-rRNA) and 46 different proteins.

The protein localises to the mitochondrion. Component of the mitochondrial ribosome (mitoribosome), a dedicated translation machinery responsible for the synthesis of mitochondrial genome-encoded proteins, including at least some of the essential transmembrane subunits of the mitochondrial respiratory chain. The mitoribosomes are attached to the mitochondrial inner membrane and translation products are cotranslationally integrated into the membrane. This is Large ribosomal subunit protein mL60 (MRPL31) from Saccharomyces cerevisiae (strain ATCC 204508 / S288c) (Baker's yeast).